Consider the following 348-residue polypeptide: Flagellar P-ring protein (348 aa).

The first 16 residues, 1 to 16, serve as a signal peptide directing secretion; the sequence is MRVLTIFLLFMTSIFA.

This sequence belongs to the FlgI family. The basal body constitutes a major portion of the flagellar organelle and consists of four rings (L,P,S, and M) mounted on a central rod.

The protein localises to the periplasm. The protein resides in the bacterial flagellum basal body. In terms of biological role, assembles around the rod to form the L-ring and probably protects the motor/basal body from shearing forces during rotation. This chain is Flagellar P-ring protein, found in Campylobacter jejuni subsp. jejuni serotype O:23/36 (strain 81-176).